The chain runs to 574 residues: MTKLRGIAASDGIATAKAYMLVQPDLSFSKSTISDSEKEINRLHKALQDSTSDLETIRKIAAESLGEEEAQVFDAHMMILADPEFTGAIEGKINDDKVNAEQALKEVADLFVATFESMTNNAYMQERAADIKDVTKRVLSHLLGVTLPNPALIDEEVIVIAHDLTPSDTAQLNGKFVKAFVTDVGGRTSHSAIMARSLEIPAIVGTETVTQDVKAGDLLIVDGINGDVVLDPTDADIAEYDVKAQAFADQKAEWEKLKNEKSVTKDGKTFTVAANIGTPKDLAGVLENGSEAIGLYRTEFLYMDSAELPSEDDQFEAYKSVLEGMDGKPVVVRTMDIGGDKKLPYLPLPEEMNPFLGYRAIRISLDRDDIFRTQLRALLRASNYGKLRIMFPMIATVAEFRQAKGILEDEKAKLIAAGQTVSDDLQVGMMVEIPASAVLANQFAKEVDFFSIGTNDLIQYTMAADRMNERVSYLYQPYNPAILRLIKNVIDASHKEGKWTGMCGEAAGDSIMAPLLVGMGLDEFSMSATSVLRVRSLMKRLDTTELTDLVETAVNVNTSNEENQKLVEDFMKDR.

Residue His190 is the Tele-phosphohistidine intermediate of the active site. 2 residues coordinate phosphoenolpyruvate: Arg297 and Arg333. Residues Glu432 and Asp456 each coordinate Mg(2+). Phosphoenolpyruvate contacts are provided by residues 455-456 (ND) and Arg466. Cys503 functions as the Proton donor in the catalytic mechanism.

It belongs to the PEP-utilizing enzyme family. Homodimer. Mg(2+) serves as cofactor.

Its subcellular location is the cytoplasm. The enzyme catalyses L-histidyl-[protein] + phosphoenolpyruvate = N(pros)-phospho-L-histidyl-[protein] + pyruvate. In terms of biological role, general (non sugar-specific) component of the phosphoenolpyruvate-dependent sugar phosphotransferase system (sugar PTS). This major carbohydrate active-transport system catalyzes the phosphorylation of incoming sugar substrates concomitantly with their translocation across the cell membrane. Enzyme I transfers the phosphoryl group from phosphoenolpyruvate (PEP) to the phosphoryl carrier protein (HPr). The sequence is that of Phosphoenolpyruvate-protein phosphotransferase (ptsI) from Latilactobacillus sakei (Lactobacillus sakei).